The primary structure comprises 32 residues: Hemocyanin C chain (32 aa).

It belongs to the tyrosinase family. Hemocyanin subfamily. Hemolymph.

It is found in the secreted. The protein localises to the extracellular space. In terms of biological role, hemocyanins are copper-containing oxygen carriers occurring freely dissolved in the hemolymph of many mollusks and arthropods. This is Hemocyanin C chain from Cherax destructor (Common yabby crayfish).